Reading from the N-terminus, the 369-residue chain is Maltose/maltodextrin import ATP-binding protein MalK (369 aa).

The ABC transporter domain occupies 4-234 (VQLRNVTKAW…PADRFVAGFI (231 aa)). 36–43 (GPSGCGKS) serves as a coordination point for ATP.

It belongs to the ABC transporter superfamily. Maltooligosaccharide importer (TC 3.A.1.1.1) family. As to quaternary structure, the complex is composed of two ATP-binding proteins (MalK), two transmembrane proteins (MalG and MalK) and a solute-binding protein (MalE).

The protein localises to the cell inner membrane. The catalysed reaction is D-maltose(out) + ATP + H2O = D-maltose(in) + ADP + phosphate + H(+). In terms of biological role, part of the ABC transporter complex MalEFGK involved in maltose/maltodextrin import. Responsible for energy coupling to the transport system. The polypeptide is Maltose/maltodextrin import ATP-binding protein MalK (Salmonella choleraesuis (strain SC-B67)).